A 594-amino-acid polypeptide reads, in one-letter code: Protein wntless (594 aa).

At 1-13 (MSGTILENLSGRK) the chain is on the cytoplasmic side. The chain crosses the membrane as a helical span at residues 14–34 (LSILVATLLLCQVLCFLLGGL). At 35–239 (YAPLPAGHVT…AIHQNGGFTQ (205 aa)) the chain is on the lumenal side. Asparagine 58 is a glycosylation site (N-linked (GlcNAc...) asparagine). A helical membrane pass occupies residues 240–260 (IWLLLKTMLFPFVVGIMIWFW). The Cytoplasmic portion of the chain corresponds to 261–270 (RRVHLLQRSP). The chain crosses the membrane as a helical span at residues 271–291 (ALLEYMLIYLGAALTFLNLPL). Over 292–311 (EYLSLVYEMPYMLLLSDIRQ) the chain is Lumenal. A helical transmembrane segment spans residues 312-332 (GIFYAMLLTFWLVFAGEHMLI). Topologically, residues 333-344 (QDAPNKSTIRSR) are cytoplasmic. Residues 345–365 (YWKHLSAVVVGCISLFVFDIC) form a helical membrane-spanning segment. Over 366 to 390 (ERGVQLRNPFYSIWTTPLGAKVAMT) the chain is Lumenal. Residues 391-411 (FIVLAGVSAAIYFLFLCYMIW) traverse the membrane as a helical segment. Over 412-473 (KVFRNIGDKR…ANESKGLIYR (62 aa)) the chain is Cytoplasmic. The chain crosses the membrane as a helical span at residues 474 to 494 (FKFLMLATLVCAALTVAGFIM). At 495 to 514 (GQMAEGQWDWNDNVAIQPTS) the chain is on the lumenal side. Residues 515–535 (AFLTGVYGMWNIYIFALLILY) form a helical membrane-spanning segment. Residues 536–594 (APSHKQWPTMHHSDETTQSNENIVASAASEEIEFSHLPSDSNPSEISSLTSFTRKVAFD) lie on the Cytoplasmic side of the membrane. A disordered region spans residues 571 to 594 (HLPSDSNPSEISSLTSFTRKVAFD). Positions 573 to 588 (PSDSNPSEISSLTSFT) are enriched in polar residues.

Belongs to the wntless family. As to quaternary structure, interacts with wg; in the Golgi. Interacts with Vps35, a component of the retromer complex; wls stability is regulated by Vps35. As to expression, ubiquitously expressed in the wing imaginal disk, increased expression is observed in a stripe at the dorso-ventral boundary and other regions of the wing disk that express wg. Also expresses in the leg imaginal disk. During larval development, expression is seen in both motorneurons and muscle.

It localises to the presynaptic cell membrane. It is found in the postsynaptic cell membrane. The protein localises to the cell membrane. The protein resides in the endosome membrane. Its subcellular location is the endoplasmic reticulum membrane. It localises to the golgi apparatus membrane. In terms of biological role, a segment polarity gene required for wingless (wg)-dependent patterning processes, acting in both wg-sending cells and wg-target cells. In non-neuronal cells wls directs wg secretion. The wls traffic loop encompasses the Golgi, the cell surface, an endocytic compartment and a retrograde route leading back to the Golgi, and involves clathrin-mediated endocytosis and the retromer complex (a conserved protein complex consisting of Vps35 and Vps26). In neuronal cells (the larval motorneuron NMJ), the wg signal moves across the synapse via the release of wls-containing exosome-like vesicles. Postsynaptic wls is required for the trafficking of fz2 through the fz2-interacting protein Grip. This is Protein wntless from Drosophila melanogaster (Fruit fly).